The primary structure comprises 38 residues: Large ribosomal subunit protein bL36 (38 aa).

Belongs to the bacterial ribosomal protein bL36 family.

The protein is Large ribosomal subunit protein bL36 of Chlorobium limicola (strain DSM 245 / NBRC 103803 / 6330).